Consider the following 507-residue polypeptide: Probable lipid II flippase MurJ (507 aa).

The next 13 membrane-spanning stretches (helical) occupy residues 3-23, 54-74, 92-112, 132-152, 156-176, 185-205, 268-288, 310-330, 351-371, 379-399, 405-425, 438-458, and 472-492; these read LFRS…FGLV, IFAE…KMLI, LTLI…ILCI, ITIP…ILNS, FAAF…FTLI, ISIS…MFIC, IYQF…LPEM, IGLL…HPIT, ISAF…TPIF, TPLK…LLLM, IGIA…LYSY, IKLF…IIAL, and LLIK…IFFG.

The protein belongs to the MurJ/MviN family.

The protein localises to the cell inner membrane. The protein operates within cell wall biogenesis; peptidoglycan biosynthesis. Functionally, involved in peptidoglycan biosynthesis. Transports lipid-linked peptidoglycan precursors from the inner to the outer leaflet of the cytoplasmic membrane. The chain is Probable lipid II flippase MurJ from Rickettsia prowazekii (strain Madrid E).